We begin with the raw amino-acid sequence, 1099 residues long: Contactin-5 (1099 aa).

The first 18 residues, 1–18 (MASSWRLILFLSFTSCLS), serve as a signal peptide directing secretion. Ig-like C2-type domains lie at 99-190 (PVFV…ATLQ), 196-282 (NFSG…RVLS), 300-385 (PKIE…GQLQ), 390-474 (PHWV…AELK), 480-569 (PSFE…VSVK), and 571-660 (PTRI…DSVS). Cys123 and Cys173 form a disulfide bridge. N-linked (GlcNAc...) asparagine glycans are attached at residues Asn138 and Asn196. Intrachain disulfides connect Cys217/Cys269 and Cys322/Cys369. 3 N-linked (GlcNAc...) asparagine glycosylation sites follow: Asn397, Asn449, and Asn540. 3 disulfides stabilise this stretch: Cys411-Cys458, Cys503-Cys551, and Cys593-Cys650. 4 consecutive Fibronectin type-III domains span residues 673–771 (PPGV…TNEA), 776–873 (APSN…SAEG), 878–972 (APTD…TKRH), and 977–1067 (PPGN…SYAG). N-linked (GlcNAc...) asparagine glycans are attached at residues Asn779, Asn816, and Asn931. The disordered stretch occupies residues 958–983 (YGPPSREVSATTKRHPPSEPPGNLRW). An N-linked (GlcNAc...) asparagine glycan is attached at Asn1002. Ser1072 carries the GPI-anchor amidated serine lipid modification. A propeptide spans 1073 to 1099 (AQSTLHSLSKWSSVTLLLALMLPSSSW) (removed in mature form).

It belongs to the immunoglobulin superfamily. Contactin family. Interacts with PTPRG. As to expression, specifically expressed in the nervous system. Expressed in cerebrum and cerebellum but at low level in spinal cord. In brain, it is expressed in highly restricted regions at postnatal day 7, such as the auditory pathway, including the cochlear nucleus, superior olive, inferior colliculus, medial geniculate nucleus and auditory cortex. Expressed in the accessory olfactory bulb, glomerular and mitral cell layers in the olfactory bulb, anterior thalamic nuclei, layers II-IV of the cerebral cortex, dentate gyrus of the hippocampus and external granule cells and Purkinje cells of the cerebellum. Also expressed in the piriform cortex, inferior olive and facial nucleus. Weakly or not expressed in other parts of the brain.

The protein resides in the cell membrane. Functionally, contactins mediate cell surface interactions during nervous system development. Has some neurite outgrowth-promoting activity in the cerebral cortical neurons but not in hippocampal neurons. Probably involved in neuronal activity in the auditory system. In Rattus norvegicus (Rat), this protein is Contactin-5 (Cntn5).